The following is a 22-amino-acid chain: Hemocyanin subunit 4 (22 aa).

The protein belongs to the tyrosinase family. Hemocyanin subfamily. Hemolymph.

The protein localises to the secreted. It localises to the extracellular space. Functionally, hemocyanins are copper-containing oxygen carriers occurring freely dissolved in the hemolymph of many mollusks and arthropods. The chain is Hemocyanin subunit 4 from Homarus americanus (American lobster).